A 177-amino-acid chain; its full sequence is Ribosome maturation factor RimM (177 aa).

In terms of domain architecture, PRC barrel spans 104 to 176 (DGEYYFFEIL…KIIVNMPEWL (73 aa)).

This sequence belongs to the RimM family. In terms of assembly, binds ribosomal protein uS19.

The protein localises to the cytoplasm. Functionally, an accessory protein needed during the final step in the assembly of 30S ribosomal subunit, possibly for assembly of the head region. Essential for efficient processing of 16S rRNA. May be needed both before and after RbfA during the maturation of 16S rRNA. It has affinity for free ribosomal 30S subunits but not for 70S ribosomes. This chain is Ribosome maturation factor RimM, found in Fervidobacterium nodosum (strain ATCC 35602 / DSM 5306 / Rt17-B1).